Here is a 556-residue protein sequence, read N- to C-terminus: Arginine--tRNA ligase (556 aa).

The short motif at 132–142 is the 'HIGH' region element; the sequence is ANPTGDLHLGH.

The protein belongs to the class-I aminoacyl-tRNA synthetase family. In terms of assembly, monomer.

The protein resides in the cytoplasm. The catalysed reaction is tRNA(Arg) + L-arginine + ATP = L-arginyl-tRNA(Arg) + AMP + diphosphate. The sequence is that of Arginine--tRNA ligase from Listeria monocytogenes serovar 1/2a (strain ATCC BAA-679 / EGD-e).